We begin with the raw amino-acid sequence, 207 residues long: Guanylate kinase (207 aa).

In terms of domain architecture, Guanylate kinase-like spans 4-184; it reads GLLFIVSAPS…AVSDLYKIIR (181 aa). 11-18 is an ATP binding site; that stretch reads APSGTGKS.

It belongs to the guanylate kinase family.

Its subcellular location is the cytoplasm. It catalyses the reaction GMP + ATP = GDP + ADP. In terms of biological role, essential for recycling GMP and indirectly, cGMP. This is Guanylate kinase from Buchnera aphidicola subsp. Baizongia pistaciae (strain Bp).